The sequence spans 151 residues: UPF0719 transmembrane protein MAP_1032c (151 aa).

4 consecutive transmembrane segments (helical) span residues 20–40 (VATILYFAVGMAVLLVGFYAV), 60–80 (AVVVAGAMYIALTVVIITAIA), 90–110 (LVGVAVYGLMGVILLGVALLA), and 130–150 (PGSFAVALILLAVGGVTAAAV).

The protein belongs to the UPF0719 family.

The protein localises to the cell membrane. The protein is UPF0719 transmembrane protein MAP_1032c of Mycolicibacterium paratuberculosis (strain ATCC BAA-968 / K-10) (Mycobacterium paratuberculosis).